A 787-amino-acid chain; its full sequence is Disintegrin and metalloproteinase domain-containing protein 32 (787 aa).

The signal sequence occupies residues 1–16 (MFRLWLLLAGLCGLLA). At S17 the chain carries Phosphoserine. Residues 17–174 (SRPGFQNSLL…PMDDNIFISE (158 aa)) constitute a propeptide that is removed on maturation. N39 and N125 each carry an N-linked (GlcNAc...) asparagine glycan. Residues 175–682 (KSEPAVPDLF…ERASGKTENT (508 aa)) are Extracellular-facing. One can recognise a Peptidase M12B domain in the interval 186–383 (LYLEMHIVVD…VGVKCLQNKP (198 aa)). Disulfide bonds link C295–C378, C337–C362, C339–C344, and C450–C471. Residues 391-479 (KPVCGNGRLE…ECGPDITLIN (89 aa)) enclose the Disintegrin domain. N-linked (GlcNAc...) asparagine glycans are attached at residues N465 and N598. The EGF-like domain occupies 622–654 (SAHVCSQQCSGHGVCDSRNKCHCSPGYKPPNCQ). Cystine bridges form between C626/C636, C630/C642, and C644/C653. Residues 683-703 (WLLGFLIALPILIVTTAIVLA) traverse the membrane as a helical segment. The Cytoplasmic segment spans residues 704-787 (RKQLKKWFAK…DSTQTQSSSN (84 aa)). The interval 715–787 (EEFPSSESKS…DSTQTQSSSN (73 aa)) is disordered. Polar residues predominate over residues 728-749 (TQTYASQSSSEGSTQTYASQTR). A compositionally biased stretch (low complexity) spans 771–787 (TSRSKSQDSTQTQSSSN).

In terms of tissue distribution, testis specific.

Its subcellular location is the membrane. Its function is as follows. May play a role in sperm development and fertilization This is a non-catalytic metalloprotease-like protein. This Homo sapiens (Human) protein is Disintegrin and metalloproteinase domain-containing protein 32 (ADAM32).